Here is a 411-residue protein sequence, read N- to C-terminus: MAATAGATPSSHLLLSSSRHVAASPQPRILFPSLSGKRVAVGKNHHATGVRCMAVAADATAETKPAAKKKSGYELQTLTSWLLRQEMKGEIDTELTIVMSSIAMACKQIASLVQRAGISNLTGVQGAVNIQGEDQKKLDVVSNEVFSNCLRSSGRTGIIASEEEDVPVAVEESYSGNYVVVFDPLDGSSNIDAAVSTGSIFGIYSPNDECLPDSDDTSALGSEEERCIVNVCQPGNNLLAAGYCMYSSSVIFVLTLGKGVFAFTLDPMYGEFVLTQENIEIPKAGKIYSFNEGNYQMWDENLKKYIDDLKDPGPSGKPYSARYIGSLVGDFHRTLLYGGIYGYPRDAKSKNGKLRLLYECAPMSFIVEQAGGKGSDGHHRVLDIQPTEIHQRVPLYIGSKEEVEKLEKYLA.

A chloroplast-targeting transit peptide spans 1–53; it reads MAATAGATPSSHLLLSSSRHVAASPQPRILFPSLSGKRVAVGKNHHATGVRCM. Residues Glu-133, Glu-162, Asp-183, Leu-185, and Asp-186 each contribute to the Mg(2+) site. 186-189 contacts substrate; the sequence is DGSS. Cys-227 and Cys-232 are joined by a disulfide. Asn-291, Tyr-323, Tyr-341, Tyr-343, and Lys-353 together coordinate substrate. Glu-359 is a binding site for Mg(2+).

The protein belongs to the FBPase class 1 family. As to quaternary structure, homotetramer. Mg(2+) serves as cofactor.

The protein resides in the plastid. Its subcellular location is the chloroplast stroma. The catalysed reaction is beta-D-fructose 1,6-bisphosphate + H2O = beta-D-fructose 6-phosphate + phosphate. Its pathway is carbohydrate biosynthesis; Calvin cycle. In Brassica napus (Rape), this protein is Fructose-1,6-bisphosphatase, chloroplastic (FBP).